Here is a 97-residue protein sequence, read N- to C-terminus: HssA/B-like protein 48 (97 aa).

Disordered regions lie at residues 1-20 and 78-97; these read MTLF…SKSS and GSGY…CCGI.

The protein belongs to the hssA/B family.

In Dictyostelium discoideum (Social amoeba), this protein is HssA/B-like protein 48 (hssl48).